The chain runs to 216 residues: Adenylate kinase (216 aa).

Residue 10 to 15 (GAGKGT) participates in ATP binding. The segment at 30–59 (STGDMFRAAMKAETEMGLQAKSFIDKGALV) is NMP. AMP is bound by residues Thr31, Arg36, 57–59 (ALV), 85–88 (GFPR), and Gln92. Positions 126–163 (GRRICKECGATYHLEFNPPAKADVCDKCGGELYQRSDD) are LID. Arg127 contributes to the ATP binding site. 2 residues coordinate Zn(2+): Cys130 and Cys133. 136-137 (TY) lines the ATP pocket. Zn(2+) is bound by residues Cys150 and Cys153. Positions 160 and 171 each coordinate AMP. ATP is bound at residue Gln199.

This sequence belongs to the adenylate kinase family. Monomer.

Its subcellular location is the cytoplasm. It catalyses the reaction AMP + ATP = 2 ADP. Its pathway is purine metabolism; AMP biosynthesis via salvage pathway; AMP from ADP: step 1/1. Functionally, catalyzes the reversible transfer of the terminal phosphate group between ATP and AMP. Plays an important role in cellular energy homeostasis and in adenine nucleotide metabolism. This is Adenylate kinase from Bacillus cereus (strain G9842).